The sequence spans 217 residues: MSPVRPRFYTPREVSRHCIVSDLWVSYLGRVYDLSPLLELHKGDVLLKPIIEAAGRDISHWFNPKTGDVKTHIDPQTGCLKYYTPQGRFLHTAPSFPCSGWDNDFGRPWWKESTYQIGILSSKTKFIRIINTLTSQEQALEVCSEETIREILGRYLPYNGHAGSYTWKFCGLPLDMDKTLQENGVWDEDEEFEELKIASDLYTPSIHLYFNDDLTEL.

The 67-residue stretch at 6–72 folds into the Cytochrome b5 heme-binding domain; sequence PRFYTPREVS…NPKTGDVKTH (67 aa). Positions 41 and 72 each coordinate heme.

This sequence belongs to the cytochrome b5 family.

The protein localises to the cytoplasm. Its subcellular location is the cytoskeleton. It is found in the cilium axoneme. Radial spoke stalk protein that binds heme under oxidizing conditions. Required for the coordinated beating of multiple cilia maybe by functioning in a redox signaling pathway. This is Cytochrome b5 domain-containing protein 1 (cyb5d1) from Xenopus tropicalis (Western clawed frog).